The following is a 151-amino-acid chain: SsrA-binding protein (151 aa).

This sequence belongs to the SmpB family.

It localises to the cytoplasm. Functionally, required for rescue of stalled ribosomes mediated by trans-translation. Binds to transfer-messenger RNA (tmRNA), required for stable association of tmRNA with ribosomes. tmRNA and SmpB together mimic tRNA shape, replacing the anticodon stem-loop with SmpB. tmRNA is encoded by the ssrA gene; the 2 termini fold to resemble tRNA(Ala) and it encodes a 'tag peptide', a short internal open reading frame. During trans-translation Ala-aminoacylated tmRNA acts like a tRNA, entering the A-site of stalled ribosomes, displacing the stalled mRNA. The ribosome then switches to translate the ORF on the tmRNA; the nascent peptide is terminated with the 'tag peptide' encoded by the tmRNA and targeted for degradation. The ribosome is freed to recommence translation, which seems to be the essential function of trans-translation. This chain is SsrA-binding protein, found in Geotalea uraniireducens (strain Rf4) (Geobacter uraniireducens).